A 608-amino-acid polypeptide reads, in one-letter code: Centromere DNA-binding protein complex CBF3 subunit B (608 aa).

The segment at residues 14–42 (CSVCTRRKVKCDRMIPCGNCRKRGQDSEC) is a DNA-binding region (zn(2)-C6 fungal-type). Phosphoserine is present on Ser575.

As to quaternary structure, component of the CBF3 copmplex, which is formed of CBF3A/CBF2, CBF3B/CEP3, CBF3C/CTF13 and CBF3D.

It is found in the nucleus. The protein resides in the chromosome. The protein localises to the centromere. Functionally, acts as a component of the centromere DNA-binding protein complex CBF3, which is essential for chromosome segregation and movement of centromeres along microtubules. CBF3 is required for the recruitment of other kinetochore complexes to CEN DNA. It plays a role in the attachment of chromosomes to the spindle and binds selectively to a highly conserved DNA sequence called CDEIII, found in centromers and in several promoters. This is Centromere DNA-binding protein complex CBF3 subunit B (CEP3) from Saccharomyces cerevisiae (strain ATCC 204508 / S288c) (Baker's yeast).